The sequence spans 314 residues: Methionyl-tRNA formyltransferase (314 aa).

A (6S)-5,6,7,8-tetrahydrofolate-binding site is contributed by 110–113; it reads SLLP.

It belongs to the Fmt family.

It catalyses the reaction L-methionyl-tRNA(fMet) + (6R)-10-formyltetrahydrofolate = N-formyl-L-methionyl-tRNA(fMet) + (6S)-5,6,7,8-tetrahydrofolate + H(+). Functionally, attaches a formyl group to the free amino group of methionyl-tRNA(fMet). The formyl group appears to play a dual role in the initiator identity of N-formylmethionyl-tRNA by promoting its recognition by IF2 and preventing the misappropriation of this tRNA by the elongation apparatus. This chain is Methionyl-tRNA formyltransferase, found in Lactobacillus acidophilus (strain ATCC 700396 / NCK56 / N2 / NCFM).